Reading from the N-terminus, the 166-residue chain is Small heat shock protein OV25-2 (166 aa).

The sHSP domain maps to 38-149; sequence LNECNIGNSL…ASRNIPIRAS (112 aa). A disordered region spans residues 140–166; it reads ASRNIPIRASPKEPEANQKSAINDAKQ.

This sequence belongs to the small heat shock protein (HSP20) family.

This Onchocerca volvulus protein is Small heat shock protein OV25-2 (OV25-2).